Reading from the N-terminus, the 525-residue chain is MNNIHDHKILILDFGSQYTQLIARRIREIGVYCELWAWDVSEEQIKEFAPNGIILAGGPESVTAKDSPRAPEYVFTAGVPVLGICYGMQTMSEQLGGKVIQGVGEGEFGYAQVELQTQSELFKSIEDAISDSGKPLLDVWMSHGDKVSEIPEGFVTVANTETCPYAAMANEEKKFYGVQFHPEVTHTRQGKRMLEHFALDICQCDANWKPASIIEDAIERLKQQIGDDEVILGLSGGVDSSVVAMLLHRAIGDKLTCVFVDNGLLRLNEAQQVMDMFGDHFGLNIVHVDAENRFLDAMAGEADPEAKRKIIGHVFVDIFDEESKKCVNAKWLAQGTIYPDVIESAGSATGKAHVIKSHHNVGGLPDDMEMGLVEPLRELFKDEVRKIGLELGLPYDMLYRHPFPGPGLGVRVLGEVKKEYCDLLRLADAIFIEELHKADLYNKVSQAFTVFLPVRSVGVMGDGRKYDWVVSLRAVETIDFMTAHWAHLPYDFLGRVSNRIINEIDGISRVVYDISGKPPATIEWE.

Residues 8–207 (KILILDFGSQ…ALDICQCDAN (200 aa)) form the Glutamine amidotransferase type-1 domain. Cys-85 acts as the Nucleophile in catalysis. Catalysis depends on residues His-181 and Glu-183. In terms of domain architecture, GMPS ATP-PPase spans 208-400 (WKPASIIEDA…LGLPYDMLYR (193 aa)). Position 235–241 (235–241 (SGGVDSS)) interacts with ATP.

In terms of assembly, homodimer.

The enzyme catalyses XMP + L-glutamine + ATP + H2O = GMP + L-glutamate + AMP + diphosphate + 2 H(+). Its pathway is purine metabolism; GMP biosynthesis; GMP from XMP (L-Gln route): step 1/1. In terms of biological role, catalyzes the synthesis of GMP from XMP. This chain is GMP synthase [glutamine-hydrolyzing], found in Shewanella woodyi (strain ATCC 51908 / MS32).